We begin with the raw amino-acid sequence, 154 residues long: 6,7-dimethyl-8-ribityllumazine synthase (154 aa).

Residues phenylalanine 22, alanine 57–glutamate 59, and alanine 81–isoleucine 83 each bind 5-amino-6-(D-ribitylamino)uracil. Glycine 86–threonine 87 contacts (2S)-2-hydroxy-3-oxobutyl phosphate. The active-site Proton donor is the histidine 89. A 5-amino-6-(D-ribitylamino)uracil-binding site is contributed by phenylalanine 114. Arginine 128 contacts (2S)-2-hydroxy-3-oxobutyl phosphate.

This sequence belongs to the DMRL synthase family. Forms an icosahedral capsid composed of 60 subunits, arranged as a dodecamer of pentamers.

The enzyme catalyses (2S)-2-hydroxy-3-oxobutyl phosphate + 5-amino-6-(D-ribitylamino)uracil = 6,7-dimethyl-8-(1-D-ribityl)lumazine + phosphate + 2 H2O + H(+). Its pathway is cofactor biosynthesis; riboflavin biosynthesis; riboflavin from 2-hydroxy-3-oxobutyl phosphate and 5-amino-6-(D-ribitylamino)uracil: step 1/2. Catalyzes the formation of 6,7-dimethyl-8-ribityllumazine by condensation of 5-amino-6-(D-ribitylamino)uracil with 3,4-dihydroxy-2-butanone 4-phosphate. This is the penultimate step in the biosynthesis of riboflavin. This Colwellia psychrerythraea (strain 34H / ATCC BAA-681) (Vibrio psychroerythus) protein is 6,7-dimethyl-8-ribityllumazine synthase.